The following is a 669-amino-acid chain: MGIRNIGIMAHIDAGKTTTTERIIYYTGKSHKMGDVDSGNTITDWMPQEQERGITISSAAITCHWKEHQINIIDTPGHVDFTAEVERSLRVLDGGIVIFSAVDGIQAQTETVWKQAEKYEIPRLAYVNKMDRVGANFFKVVEDIENKFKTIPLVLQIPIGNESNFEGVVDIILNKELHFAMENGIPKLTYSQIREEFIEKTALFKKKLIDILSQFSEEITQLFLEDKEISLDVIKSEIRRGTISRFIIPVLMGTSLKNIGIEPLIDSIVDYLPSPFEKSFTAFSLDTNKKILVDPNENKKLSALVFKVQYSSVIAAHLYFVRVYSGEINSNKKIFNASNGKREKFTKIFRVFSNKNEQIDFVKTGDIGAVLGLKFSVTGDTLIEENNNILLESVMFPEPVVLMSVEPERSSDEVRLKEIFEIISKEDPTFSYSESKETGQLIISGMGELHLEIILTRIKDEFNLNVYTGKPQVSYRESAGKIVKEVFEFNNIFAGKNINFKIGMIIKPLSRGEGNKIDFECSIDSTIKSAILRGITTTFVSGAFGYPIIDINVIIFSIVCEISKISESVFESISGFAFHSIFQKSDPIRLEPIMLLEIRTPIEHTGEIISTLNVIGGVIHSVSNIGEYDLIKSEAAFEKLFGYASILRSSTKGRGSFTMEFSYFKEKVS.

The tr-type G domain occupies 1–276 (MGIRNIGIMA…SIVDYLPSPF (276 aa)). GTP-binding positions include 10–17 (AHIDAGKT), 74–78 (DTPGH), and 128–131 (NKMD).

The protein belongs to the TRAFAC class translation factor GTPase superfamily. Classic translation factor GTPase family. EF-G/EF-2 subfamily.

The protein resides in the cytoplasm. Its function is as follows. Catalyzes the GTP-dependent ribosomal translocation step during translation elongation. During this step, the ribosome changes from the pre-translocational (PRE) to the post-translocational (POST) state as the newly formed A-site-bound peptidyl-tRNA and P-site-bound deacylated tRNA move to the P and E sites, respectively. Catalyzes the coordinated movement of the two tRNA molecules, the mRNA and conformational changes in the ribosome. The protein is Elongation factor G 2 (fusA2) of Borreliella afzelii (strain PKo) (Borrelia afzelii).